The chain runs to 185 residues: Ribosome-recycling factor (185 aa).

The protein belongs to the RRF family.

The protein resides in the cytoplasm. In terms of biological role, responsible for the release of ribosomes from messenger RNA at the termination of protein biosynthesis. May increase the efficiency of translation by recycling ribosomes from one round of translation to another. The chain is Ribosome-recycling factor from Corynebacterium aurimucosum (strain ATCC 700975 / DSM 44827 / CIP 107346 / CN-1) (Corynebacterium nigricans).